Reading from the N-terminus, the 421-residue chain is Meiotic fizzy-related protein 1 (421 aa).

A disordered region spans residues 79–107 (DTPDRKSYSLSPISPQSQDMLRQPQKPKR). A compositionally biased stretch (polar residues) spans 86–98 (YSLSPISPQSQDM). WD repeat units lie at residues 123–160 (KNDF…VVQL), 164–203 (GATN…SVRS), 206–246 (GHSE…EMMK), 247–286 (VHEQ…PLHK), 289–331 (EHTA…LQNK), 333–374 (DTGS…NIAN), and 377–416 (AHTN…PKEE).

The protein belongs to the WD repeat CDC20/Fizzy family. In terms of assembly, interacts with mes1.

It localises to the nucleus. In terms of biological role, meiosis-specific activator of the anaphase promoting complex/cyclosome (APC/C). Involved in cdc13 degradation. This is Meiotic fizzy-related protein 1 (mfr1) from Schizosaccharomyces pombe (strain 972 / ATCC 24843) (Fission yeast).